We begin with the raw amino-acid sequence, 204 residues long: Octanoyltransferase (204 aa).

A BPL/LPL catalytic domain is found at 27 to 202; it reads QGGEEALLLL…RFQPFLHLHL (176 aa). Substrate-binding positions include 65 to 72, 132 to 134, and 145 to 147; these read RGGDVTYH, SIG, and GFA. C163 serves as the catalytic Acyl-thioester intermediate.

Belongs to the LipB family.

It is found in the cytoplasm. The enzyme catalyses octanoyl-[ACP] + L-lysyl-[protein] = N(6)-octanoyl-L-lysyl-[protein] + holo-[ACP] + H(+). Its pathway is protein modification; protein lipoylation via endogenous pathway; protein N(6)-(lipoyl)lysine from octanoyl-[acyl-carrier-protein]: step 1/2. In terms of biological role, catalyzes the transfer of endogenously produced octanoic acid from octanoyl-acyl-carrier-protein onto the lipoyl domains of lipoate-dependent enzymes. Lipoyl-ACP can also act as a substrate although octanoyl-ACP is likely to be the physiological substrate. The chain is Octanoyltransferase from Geobacter sp. (strain M21).